Reading from the N-terminus, the 234-residue chain is Multicopy suppressor of SEC21 protein 27 (234 aa).

Residues 1–47 (MQTPLESTDVKLDTLNEPSAHLIEKNVALPKDIFRSYLSYWIYEIAR) lie on the Cytoplasmic side of the membrane. Thr-3 is subject to Phosphothreonine. Residues 48 to 68 (YTPVMILSLVIGVLVLLIIFF) form a helical membrane-spanning segment. The Extracellular segment spans residues 69–72 (NDNE). A helical membrane pass occupies residues 73–93 (ACVFNSAYYAYLSLVVLLIIL). Residues 94-234 (GDGNPKLVSR…NIDALLKKTE (141 aa)) lie on the Cytoplasmic side of the membrane. Positions 231–234 (KKTE) are COPI binding.

The protein belongs to the DUP/COS family. In terms of assembly, interacts with MST28. Binds to coatomer proteins of COPI and SEC23/SEC24 of COPII coated vesicles.

The protein resides in the endoplasmic reticulum. The protein localises to the golgi apparatus. Its subcellular location is the cytoplasmic vesicle. It is found in the COPI-coated vesicle membrane. It localises to the COPII-coated vesicle membrane. Functionally, involved in protein trafficking vesicle formation, probably by stabilizing of coatomer at the Golgi membrane and thus allowing the efficient formation of COPI coated vesicles. The polypeptide is Multicopy suppressor of SEC21 protein 27 (MST27) (Saccharomyces cerevisiae (strain ATCC 204508 / S288c) (Baker's yeast)).